The primary structure comprises 269 residues: Interleukin-1 beta (269 aa).

Positions Met1–Asp112 are excised as a propeptide.

The protein belongs to the IL-1 family. Monomer. In its precursor form, weakly interacts with full-length MEFV; the mature cytokine does not interact at all. Interacts with integrins ITGAV:ITGBV and ITGA5:ITGB1; integrin-binding is required for IL1B signaling. Interacts with cargo receptor TMED10; the interaction is direct and is required for the secretion of IL1B mature form. Interacts with HSP90AB1; the interaction facilitates cargo translocation into the ERGIC. Interacts with HSP90B1; the interaction facilitates cargo translocation into the ERGIC.

The protein resides in the cytoplasm. Its subcellular location is the cytosol. It is found in the secreted. The protein localises to the lysosome. It localises to the extracellular exosome. In terms of biological role, potent pro-inflammatory cytokine. Initially discovered as the major endogenous pyrogen, induces prostaglandin synthesis, neutrophil influx and activation, T-cell activation and cytokine production, B-cell activation and antibody production, and fibroblast proliferation and collagen production. Promotes Th17 differentiation of T-cells. Synergizes with IL12/interleukin-12 to induce IFNG synthesis from T-helper 1 (Th1) cells. Plays a role in angiogenesis by inducing VEGF production synergistically with TNF and IL6. Involved in transduction of inflammation downstream of pyroptosis: its mature form is specifically released in the extracellular milieu by passing through the gasdermin-D (GSDMD) pore. The protein is Interleukin-1 beta (IL1B) of Trichosurus vulpecula (Brush-tailed possum).